Reading from the N-terminus, the 259-residue chain is Deoxyribose-phosphate aldolase (259 aa).

Asp102 acts as the Proton donor/acceptor in catalysis. Lys167 (schiff-base intermediate with acetaldehyde) is an active-site residue. Lys201 (proton donor/acceptor) is an active-site residue.

The protein belongs to the DeoC/FbaB aldolase family. DeoC type 2 subfamily.

It localises to the cytoplasm. The enzyme catalyses 2-deoxy-D-ribose 5-phosphate = D-glyceraldehyde 3-phosphate + acetaldehyde. It functions in the pathway carbohydrate degradation; 2-deoxy-D-ribose 1-phosphate degradation; D-glyceraldehyde 3-phosphate and acetaldehyde from 2-deoxy-alpha-D-ribose 1-phosphate: step 2/2. Catalyzes a reversible aldol reaction between acetaldehyde and D-glyceraldehyde 3-phosphate to generate 2-deoxy-D-ribose 5-phosphate. The chain is Deoxyribose-phosphate aldolase from Salmonella dublin (strain CT_02021853).